The sequence spans 208 residues: Large ribosomal subunit protein bL25 (208 aa).

It belongs to the bacterial ribosomal protein bL25 family. CTC subfamily. In terms of assembly, part of the 50S ribosomal subunit; part of the 5S rRNA/L5/L18/L25 subcomplex. Contacts the 5S rRNA. Binds to the 5S rRNA independently of L5 and L18.

In terms of biological role, this is one of the proteins that binds to the 5S RNA in the ribosome where it forms part of the central protuberance. The chain is Large ribosomal subunit protein bL25 from Acidovorax ebreus (strain TPSY) (Diaphorobacter sp. (strain TPSY)).